Reading from the N-terminus, the 114-residue chain is Non-specific lipid-transfer protein 2 (114 aa).

The signal sequence occupies residues 1-23; sequence MEMVNKIACFVLLCMVVVAPHAE. 4 disulfide bridges follow: Cys27–Cys73, Cys37–Cys50, Cys51–Cys96, and Cys71–Cys110.

This sequence belongs to the plant LTP family.

Plant non-specific lipid-transfer proteins transfer phospholipids as well as galactolipids across membranes. May play a role in wax or cutin deposition in the cell walls of expanding epidermal cells and certain secretory tissues. This Solanum pennellii (Tomato) protein is Non-specific lipid-transfer protein 2 (LTP2).